We begin with the raw amino-acid sequence, 381 residues long: Protein COS8 (381 aa).

The Extracellular portion of the chain corresponds to Met-1–Glu-42. The chain crosses the membrane as a helical span at residues Ile-43 to Trp-63. The Cytoplasmic segment spans residues Lys-64–Pro-72. A helical membrane pass occupies residues Leu-73–Leu-93. Topologically, residues Ser-94 to Arg-237 are extracellular. The helical transmembrane segment at Cys-238–Ile-258 threads the bilayer. The Cytoplasmic segment spans residues Ser-259–Lys-381.

It belongs to the DUP/COS family.

The protein resides in the membrane. In Saccharomyces cerevisiae (strain ATCC 204508 / S288c) (Baker's yeast), this protein is Protein COS8 (COS8).